A 571-amino-acid chain; its full sequence is Hsp70-Hsp90 organizing protein 2 (571 aa).

3 TPR repeats span residues 2–35 (ADEA…TPTN), 37–69 (VLFS…KPDW), and 70–103 (GKGY…DPSN). The tract at residues 117–137 (ASRSRASAPNPFGDAFQGPEM) is disordered. The STI1 1 domain maps to 134–173 (GPEMWSKLTADPSTRGLLKQPDFVNMMKEIQRNPSNLNLY). At Ser168 the chain carries Phosphoserine. Residues 198-207 (DDMEIGEEEM) are compositionally biased toward acidic residues. Residues 198–245 (DDMEIGEEEMAVPSRKEPEVEKKRKPEPEPEPEPEFGEEKQKKLKAQK) form a disordered region. Basic and acidic residues-rich tracts occupy residues 211 to 225 (SRKE…KPEP) and 234 to 245 (GEEKQKKLKAQK). Residues 240–257 (KLKAQKEKELGNAAYKKK) carry the Bipartite nuclear localization signal motif. 6 TPR repeats span residues 243 to 276 (AQKE…DDED), 278 to 310 (SYIT…GREL), 322 to 355 (TRKG…HRNP), 382 to 415 (GDEE…NPKD), 417 to 449 (RAYS…DPTF), and 450 to 483 (LKGY…DPNN). The STI1 2 domain maps to 520–559 (DPEIQNILTDPVMRQVLSDLQENPAAAQKHMQNPMIMNKI).

In terms of assembly, co-chaperone that forms a complex with HSP70 and HSP90 and preproteins (e.g. chloroplast preproteins). In terms of processing, phosphorylated. Post-translationally, acetylated.

The protein resides in the cytoplasm. It is found in the nucleus. Its function is as follows. Mediates the association of the molecular chaperones HSP70 and HSP90. Mediates nuclear encoded chloroplast preproteins binding to HSP90 prior to chloroplastic sorting. This Arabidopsis thaliana (Mouse-ear cress) protein is Hsp70-Hsp90 organizing protein 2 (HOP2).